The primary structure comprises 417 residues: Methylthioribose-1-phosphate isomerase (417 aa).

Residue Asp285 is the Proton donor of the active site.

It belongs to the eIF-2B alpha/beta/delta subunits family. MtnA subfamily.

It is found in the cytoplasm. Its subcellular location is the nucleus. The catalysed reaction is 5-(methylsulfanyl)-alpha-D-ribose 1-phosphate = 5-(methylsulfanyl)-D-ribulose 1-phosphate. It participates in amino-acid biosynthesis; L-methionine biosynthesis via salvage pathway; L-methionine from S-methyl-5-thio-alpha-D-ribose 1-phosphate: step 1/6. Functionally, catalyzes the interconversion of methylthioribose-1-phosphate (MTR-1-P) into methylthioribulose-1-phosphate (MTRu-1-P). This Lachancea thermotolerans (strain ATCC 56472 / CBS 6340 / NRRL Y-8284) (Yeast) protein is Methylthioribose-1-phosphate isomerase.